We begin with the raw amino-acid sequence, 261 residues long: Glucose 1-dehydrogenase 2 (261 aa).

11–35 lines the NADP(+) pocket; the sequence is VVTGGSKGLGRAMAVRFGQEQSKVV. Ser-145 contributes to the substrate binding site. Tyr-158 serves as the catalytic Proton acceptor.

It belongs to the short-chain dehydrogenases/reductases (SDR) family. In terms of assembly, homotetramer.

The enzyme catalyses D-glucose + NAD(+) = D-glucono-1,5-lactone + NADH + H(+). The catalysed reaction is D-glucose + NADP(+) = D-glucono-1,5-lactone + NADPH + H(+). This Priestia megaterium (Bacillus megaterium) protein is Glucose 1-dehydrogenase 2 (gdhII).